We begin with the raw amino-acid sequence, 835 residues long: Protein translocase subunit SecA (835 aa).

ATP is bound by residues glutamine 85, 103-107, and aspartate 492; that span reads GEGKT. Residues 788-807 form a disordered region; that stretch reads VQGEAVHPSSDGEEAKKKPV. Zn(2+)-binding residues include cysteine 819, cysteine 821, cysteine 830, and cysteine 831.

This sequence belongs to the SecA family. As to quaternary structure, monomer and homodimer. Part of the essential Sec protein translocation apparatus which comprises SecA, SecYEG and auxiliary proteins SecDF. Other proteins may also be involved. Requires Zn(2+) as cofactor.

The protein resides in the cell membrane. It is found in the cytoplasm. The enzyme catalyses ATP + H2O + cellular proteinSide 1 = ADP + phosphate + cellular proteinSide 2.. In terms of biological role, part of the Sec protein translocase complex. Interacts with the SecYEG preprotein conducting channel. Has a central role in coupling the hydrolysis of ATP to the transfer of proteins into and across the cell membrane, serving as an ATP-driven molecular motor driving the stepwise translocation of polypeptide chains across the membrane. The protein is Protein translocase subunit SecA of Bacillus cereus (strain G9842).